A 910-amino-acid chain; its full sequence is Alanine--tRNA ligase (910 aa).

Basic and acidic residues predominate over residues 488–505 (RHEEKKEDSKSEKGENTA). The segment at 488–507 (RHEEKKEDSKSEKGENTAEK) is disordered. Zn(2+)-binding residues include His614, His618, Cys718, and His722.

It belongs to the class-II aminoacyl-tRNA synthetase family. Zn(2+) serves as cofactor.

The protein resides in the cytoplasm. It carries out the reaction tRNA(Ala) + L-alanine + ATP = L-alanyl-tRNA(Ala) + AMP + diphosphate. Its function is as follows. Catalyzes the attachment of alanine to tRNA(Ala) in a two-step reaction: alanine is first activated by ATP to form Ala-AMP and then transferred to the acceptor end of tRNA(Ala). Also edits incorrectly charged Ser-tRNA(Ala) and Gly-tRNA(Ala) via its editing domain. The polypeptide is Alanine--tRNA ligase (Methanococcus aeolicus (strain ATCC BAA-1280 / DSM 17508 / OCM 812 / Nankai-3)).